The primary structure comprises 143 residues: MNTYTVKASDIKRDWHVIDASGRVLGEVAAEAAKYLMGKHKPMFCRNLDCGDYVVIVNAKKITVTGNKLDQKMYYRHSGFPGGFRQEKLGDLLKTKPLFVIEHAVKGMIPRNTLGAQILAKLKVYEGAEHPHASQTGVVSKES.

This sequence belongs to the universal ribosomal protein uL13 family. Part of the 50S ribosomal subunit.

In terms of biological role, this protein is one of the early assembly proteins of the 50S ribosomal subunit, although it is not seen to bind rRNA by itself. It is important during the early stages of 50S assembly. This Dehalococcoides mccartyi (strain ATCC BAA-2100 / JCM 16839 / KCTC 5957 / BAV1) protein is Large ribosomal subunit protein uL13.